A 213-amino-acid chain; its full sequence is Large ribosomal subunit protein uL3 (213 aa).

Belongs to the universal ribosomal protein uL3 family. In terms of assembly, part of the 50S ribosomal subunit. Forms a cluster with proteins L14 and L19.

Functionally, one of the primary rRNA binding proteins, it binds directly near the 3'-end of the 23S rRNA, where it nucleates assembly of the 50S subunit. The protein is Large ribosomal subunit protein uL3 of Desulforudis audaxviator (strain MP104C).